The chain runs to 338 residues: Lumican (338 aa).

An N-terminal signal peptide occupies residues 1 to 18 (MNVCAFSLALALVGSVSG). Gln-19 is modified (pyrrolidone carboxylic acid). Sulfotyrosine occurs at positions 20, 21, 23, and 30. In terms of domain architecture, LRRNT spans 28-66 (FMYGQISPNCAPECNCPHSYPTAMYCDDLKLKSVPMVPP). 8 LRR repeats span residues 67-88 (GIKY…AFEN), 91-114 (DLQW…VFSK), 117-137 (QLKK…PLPK), 138-159 (SLQD…DGLV), 160-181 (NLTF…ASLK), 185-205 (SLEY…GLPT), 206-227 (SLLT…YFKR), and 230-250 (GLQY…PGNS). Residue Asn-88 is glycosylated (N-linked (GlcNAc...) (keratan sulfate) asparagine). An N-linked (GlcNAc...) (keratan sulfate) asparagine glycan is attached at Asn-127. Asn-160 carries N-linked (GlcNAc...) (keratan sulfate) asparagine glycosylation. Residue Asn-252 is glycosylated (N-linked (GlcNAc...) (keratan sulfate) asparagine). 2 LRR repeats span residues 255–276 (SLLE…NENL) and 277–296 (ENYY…SFCK). A disulfide bridge links Cys-295 with Cys-328. Ser-304 carries the phosphoserine modification. The LRR 11 repeat unit spans residues 305 to 326 (KIKHLRLDGNPLTQSSLPPDMY).

This sequence belongs to the small leucine-rich proteoglycan (SLRP) family. SLRP class II subfamily. In terms of assembly, binds to laminin. Contains keratan sulfate. In terms of processing, cys-37, Cys-41, Cys-43 and Cys-53 are involved in disulfide bonds. As to expression, cornea and other tissues.

It localises to the secreted. Its subcellular location is the extracellular space. The protein localises to the extracellular matrix. The polypeptide is Lumican (Lum) (Mus musculus (Mouse)).